The following is a 60-amino-acid chain: Large ribosomal subunit protein uL30 (60 aa).

This sequence belongs to the universal ribosomal protein uL30 family. In terms of assembly, part of the 50S ribosomal subunit.

The polypeptide is Large ribosomal subunit protein uL30 (Aromatoleum aromaticum (strain DSM 19018 / LMG 30748 / EbN1) (Azoarcus sp. (strain EbN1))).